A 280-amino-acid polypeptide reads, in one-letter code: MQTLNYLVIILIIAGVISVLAFTPLVRKLKIRFYLIQVLAIVLFVYVFFGRQIIYLFPDVYGQNSQSSQNLDSLRLSRIFLLDLCPFFAVIAPVFVFLKQKKISGVLAVFGLFGALVTLFGELIFTPVNEQDIVNFIFVGTGNNQIYFMMHFLSLLVSLAIILWDNCFSLISFFYIHVFALIYFSYVALMVSVFKGQITGNTTGILASDWTNGEYKNVATFLNLSNSDPQLVFIVGFSLSYVAILLMTLFANIPTFMEMKKDKIFIKKENLIRKDLELLA.

A run of 7 helical transmembrane segments spans residues 6-26, 38-58, 79-99, 105-125, 144-164, 171-191, and 231-251; these read YLVI…TPLV, VLAI…YLFP, IFLL…VFLK, GVLA…ELIF, NQIY…IILW, ISFF…ALMV, and LVFI…TLFA.

Its subcellular location is the cell membrane. This is an uncharacterized protein from Mycoplasma genitalium (strain ATCC 33530 / DSM 19775 / NCTC 10195 / G37) (Mycoplasmoides genitalium).